The chain runs to 327 residues: MKAPVRVTVTGAAGQISYSLLFRIAAGEMLGADQPVILQMLEITPALEALKGVAMELDDCAFPLLHSMVCTDDANVAFKDSDYALLVGARPRGPGMERNDLLEANAAIFSVQGKAINDHASRGIKVLVVGNPANTNALIAQRNAPDIDPRQFTAMTRLDHNRGMSQLASKLDVSINDITKMTIWGNHSSTQYPDLYHALVKGDAAIDKVDSTWYAEEYIPTVQQRGAAIIKARGASSAASAANAAIFHMRDWALGSPEGDWVSMGVYSDGSYGIEKGLIYSFPCVCKNGDWEIVQGLSIDEFSQARMTATETELQGERDAVKALLPA.

11-17 (GAAGQIS) lines the NAD(+) pocket. The substrate site is built by Arg-92 and Arg-98. Residues Asn-105, Gln-112, and 129-131 (VGN) contribute to the NAD(+) site. Substrate-binding residues include Asn-131 and Arg-162. Catalysis depends on His-187, which acts as the Proton acceptor.

Belongs to the LDH/MDH superfamily. MDH type 2 family.

The catalysed reaction is (S)-malate + NAD(+) = oxaloacetate + NADH + H(+). In terms of biological role, catalyzes the reversible oxidation of malate to oxaloacetate. This is Malate dehydrogenase from Teredinibacter turnerae (strain ATCC 39867 / T7901).